Reading from the N-terminus, the 206-residue chain is Cytochrome c biogenesis ATP-binding export protein CcmA (206 aa).

Positions 4-205 (LEGIDLTCIR…AGAAIQRLQL (202 aa)) constitute an ABC transporter domain. 36–43 (GPNGSGKT) lines the ATP pocket.

It belongs to the ABC transporter superfamily. CcmA exporter (TC 3.A.1.107) family. In terms of assembly, the complex is composed of two ATP-binding proteins (CcmA) and two transmembrane proteins (CcmB).

It localises to the cell inner membrane. It carries out the reaction heme b(in) + ATP + H2O = heme b(out) + ADP + phosphate + H(+). Its function is as follows. Part of the ABC transporter complex CcmAB involved in the biogenesis of c-type cytochromes; once thought to export heme, this seems not to be the case, but its exact role is uncertain. Responsible for energy coupling to the transport system. The protein is Cytochrome c biogenesis ATP-binding export protein CcmA of Nitrosospira multiformis (strain ATCC 25196 / NCIMB 11849 / C 71).